The chain runs to 202 residues: Holliday junction branch migration complex subunit RuvA (202 aa).

The segment at 1–62 is domain I; that stretch reads MIGYLRGRLH…EDAMELYGFT (62 aa). Positions 63 to 141 are domain II; the sequence is RPEELHLFTL…KSGLVDGTET (79 aa). The flexible linker stretch occupies residues 141-145; the sequence is TEAIP. The interval 146-202 is domain III; that stretch reads AGGGDNDEALAALLALGYSREEIGPILARVRQELGNAAPTTAVLQAVLKTFGRGGGD.

The protein belongs to the RuvA family. As to quaternary structure, homotetramer. Forms an RuvA(8)-RuvB(12)-Holliday junction (HJ) complex. HJ DNA is sandwiched between 2 RuvA tetramers; dsDNA enters through RuvA and exits via RuvB. An RuvB hexamer assembles on each DNA strand where it exits the tetramer. Each RuvB hexamer is contacted by two RuvA subunits (via domain III) on 2 adjacent RuvB subunits; this complex drives branch migration. In the full resolvosome a probable DNA-RuvA(4)-RuvB(12)-RuvC(2) complex forms which resolves the HJ.

It localises to the cytoplasm. Functionally, the RuvA-RuvB-RuvC complex processes Holliday junction (HJ) DNA during genetic recombination and DNA repair, while the RuvA-RuvB complex plays an important role in the rescue of blocked DNA replication forks via replication fork reversal (RFR). RuvA specifically binds to HJ cruciform DNA, conferring on it an open structure. The RuvB hexamer acts as an ATP-dependent pump, pulling dsDNA into and through the RuvAB complex. HJ branch migration allows RuvC to scan DNA until it finds its consensus sequence, where it cleaves and resolves the cruciform DNA. This Moorella thermoacetica (strain ATCC 39073 / JCM 9320) protein is Holliday junction branch migration complex subunit RuvA.